Reading from the N-terminus, the 183-residue chain is Peptidyl-tRNA hydrolase (183 aa).

Residue tyrosine 15 participates in tRNA binding. Residue histidine 20 is the Proton acceptor of the active site. Residues tyrosine 67 and asparagine 69 each coordinate tRNA.

The protein belongs to the PTH family. Monomer.

It is found in the cytoplasm. The catalysed reaction is an N-acyl-L-alpha-aminoacyl-tRNA + H2O = an N-acyl-L-amino acid + a tRNA + H(+). Its function is as follows. Hydrolyzes ribosome-free peptidyl-tRNAs (with 1 or more amino acids incorporated), which drop off the ribosome during protein synthesis, or as a result of ribosome stalling. Functionally, catalyzes the release of premature peptidyl moieties from peptidyl-tRNA molecules trapped in stalled 50S ribosomal subunits, and thus maintains levels of free tRNAs and 50S ribosomes. The sequence is that of Peptidyl-tRNA hydrolase from Chlamydia abortus (strain DSM 27085 / S26/3) (Chlamydophila abortus).